The following is a 492-amino-acid chain: Xaa-Pro dipeptidase (492 aa).

Residue alanine 2 is modified to N-acetylalanine. At serine 167 the chain carries Phosphoserine. Histidine 255 is an a dipeptide binding site. The Mn(2+) site is built by aspartate 276, aspartate 287, and histidine 370. Aspartate 287 is an a dipeptide binding site. A dipeptide is bound by residues histidine 377 and arginine 398. The Mn(2+) site is built by glutamate 412 and glutamate 452.

Belongs to the peptidase M24B family. Eukaryotic-type prolidase subfamily. Homodimer. Mn(2+) serves as cofactor.

It carries out the reaction Xaa-L-Pro dipeptide + H2O = an L-alpha-amino acid + L-proline. In terms of biological role, dipeptidase that catalyzes the hydrolysis of dipeptides with a prolyl (Xaa-Pro) or hydroxyprolyl residue in the C-terminal position. The preferred dipeptide substrate is Gly-Pro, but other Xaa-Pro dipeptides, such as Ala-Pro, Met-Pro, Phe-Pro, Val-Pro and Leu-Pro, can be cleaved. Plays an important role in collagen metabolism because the high level of iminoacids in collagen. The sequence is that of Xaa-Pro dipeptidase (Pepd) from Rattus norvegicus (Rat).